Reading from the N-terminus, the 158-residue chain is Secreted RxLR effector protein 131 (158 aa).

The signal sequence occupies residues 1-20; sequence MRQIPLVVVLLLAYAARLQG. Residues 39-57 carry the RxLR-dEER motif; the sequence is RDLDGSTTSMSVNVDDEER. Residues 120–158 are host BKI1-binding; the sequence is KGNVKYLAIIYVICILSVLGILGTVFAINRNISNQYIHE. Residues 127-147 form a helical membrane-spanning segment; the sequence is AIIYVICILSVLGILGTVFAI. Asparagine 150 carries N-linked (GlcNAc...) asparagine glycosylation.

It belongs to the RxLR effector family. In terms of assembly, interacts with host BKI1.

The protein localises to the secreted. The protein resides in the host cell membrane. In terms of biological role, secreted effector that suppresses pathogen-associated molecular pattern (PAMP)-triggered immunity (PTI) in host plants. Suppresses both defense-related brassinosteroid (BR) and ERECTA (ER) signaling pathways in planta by interacting with host BRI1 kinase inhibitor 1 (BKI1) at the host plasma membrane, leading to a host dwarf phenotype. This is Secreted RxLR effector protein 131 from Plasmopara viticola (Downy mildew of grapevine).